The primary structure comprises 249 residues: ATP synthase subunit a (249 aa).

Helical transmembrane passes span 26–46 (FTNS…FLYL), 84–104 (FFPF…LGLF), 114–134 (IVVT…YGFW), 143–163 (LFVP…IEVI), 185–205 (ITLK…VAGA), and 208–228 (AVLP…VAFL).

Belongs to the ATPase A chain family. F-type ATPases have 2 components, CF(1) - the catalytic core - and CF(0) - the membrane proton channel. CF(1) has five subunits: alpha(3), beta(3), gamma(1), delta(1), epsilon(1). CF(0) has three main subunits: a(1), b(2) and c(9-12). The alpha and beta chains form an alternating ring which encloses part of the gamma chain. CF(1) is attached to CF(0) by a central stalk formed by the gamma and epsilon chains, while a peripheral stalk is formed by the delta and b chains.

The protein resides in the cell inner membrane. Functionally, key component of the proton channel; it plays a direct role in the translocation of protons across the membrane. The protein is ATP synthase subunit a of Chelativorans sp. (strain BNC1).